The chain runs to 1098 residues: PAN2-PAN3 deadenylation complex catalytic subunit PAN2 (1098 aa).

WD repeat units follow at residues 19-58, 150-190, 253-293, and 300-338; these read ASKDPVTSLLFDSVHNLLWCGDSSGSARSFTPNAGYPFQL, TGFD…SVKS, PFPN…KLNV, and PASPGISRMEISDNGEYICCSEGRSLHLWSFTSDTNFVN. The interval 340-466 is linker; that stretch reads PAPLEEQDIP…SIFHLKSPTS (127 aa). The interval 417–442 is disordered; sequence RNISQPYQSLREPPGSNSNAPRFISE. One can recognise a USP domain in the interval 466-839; that stretch reads SVPHCYSRLQ…KPVIIVYSEP (374 aa). The Exonuclease domain occupies 894-1067; sequence IAIDAEFVVS…EDAYTALMLF (174 aa). The a divalent metal cation site is built by Asp-897, Glu-899, Asp-1006, and Asp-1059.

This sequence belongs to the peptidase C19 family. PAN2 subfamily. As to quaternary structure, forms a heterotrimer with an asymmetric homodimer of the regulatory subunit PAN3 to form the poly(A)-nuclease (PAN) deadenylation complex. Requires a divalent metal cation as cofactor.

It localises to the cytoplasm. The catalysed reaction is Exonucleolytic cleavage of poly(A) to 5'-AMP.. Positively regulated by the regulatory subunit PAN3. Its function is as follows. Catalytic subunit of the poly(A)-nuclease (PAN) deadenylation complex, one of two cytoplasmic mRNA deadenylases involved in mRNA turnover. PAN specifically shortens poly(A) tails of RNA and the activity is stimulated by poly(A)-binding protein PAB1. PAN deadenylation is followed by rapid degradation of the shortened mRNA tails by the CCR4-NOT complex. Deadenylated mRNAs are then degraded by two alternative mechanisms, namely exosome-mediated 3'-5' exonucleolytic degradation, or deadenylation-dependent mRNA decaping and subsequent 5'-3' exonucleolytic degradation by XRN1. May also be involved in post-transcriptional maturation of mRNA poly(A) tails. The sequence is that of PAN2-PAN3 deadenylation complex catalytic subunit PAN2 from Meyerozyma guilliermondii (strain ATCC 6260 / CBS 566 / DSM 6381 / JCM 1539 / NBRC 10279 / NRRL Y-324) (Yeast).